The chain runs to 483 residues: Glutamyl-tRNA(Gln) amidotransferase subunit A (483 aa).

Active-site charge relay system residues include Lys77 and Ser152. The Acyl-ester intermediate role is filled by Ser176.

It belongs to the amidase family. GatA subfamily. As to quaternary structure, heterotrimer of A, B and C subunits.

The enzyme catalyses L-glutamyl-tRNA(Gln) + L-glutamine + ATP + H2O = L-glutaminyl-tRNA(Gln) + L-glutamate + ADP + phosphate + H(+). Functionally, allows the formation of correctly charged Gln-tRNA(Gln) through the transamidation of misacylated Glu-tRNA(Gln) in organisms which lack glutaminyl-tRNA synthetase. The reaction takes place in the presence of glutamine and ATP through an activated gamma-phospho-Glu-tRNA(Gln). The chain is Glutamyl-tRNA(Gln) amidotransferase subunit A from Listeria monocytogenes serotype 4b (strain CLIP80459).